The following is a 369-amino-acid chain: Core histone macro-H2A.1 (369 aa).

In terms of domain architecture, Histone H2A spans 2-117 (SSRGGKKKST…NIHPELLAKK (116 aa)). N6-lactoyllysine; alternate occurs at positions 7 and 9. Residue Lys-18 is modified to N6-methyllysine. Lys-116 is modified (N6-acetyllysine; alternate). Lys-116 participates in a covalent cross-link: Glycyl lysine isopeptide (Lys-Gly) (interchain with G-Cter in ubiquitin); alternate. Lys-117 participates in a covalent cross-link: Glycyl lysine isopeptide (Lys-Gly) (interchain with G-Cter in ubiquitin). The residue at position 123 (Lys-123) is an N6-acetyllysine; alternate. N6,N6-dimethyllysine; alternate is present on Lys-123. Lys-123 participates in a covalent cross-link: Glycyl lysine isopeptide (Lys-Gly) (interchain with G-Cter in SUMO2); alternate. The tract at residues 128–180 (ITPPPAKKAKSPSQKKPVSKKAGGKKGARKSKKKQGEVSKAASADSTTEGTPA) is disordered. At Thr-129 the chain carries Phosphothreonine. The segment covering 144–160 (PVSKKAGGKKGARKSKK) has biased composition (basic residues). Residue Lys-167 forms a Glycyl lysine isopeptide (Lys-Gly) (interchain with G-Cter in SUMO2) linkage. Phosphoserine is present on residues Ser-170 and Ser-173. Thr-178 is subject to Phosphothreonine. The Macro domain occupies 184–367 (TVLSTKSLFL…IYVQEMAKLD (184 aa)). Lys-189 is covalently cross-linked (Glycyl lysine isopeptide (Lys-Gly) (interchain with G-Cter in SUMO2)). Positions 203, 204, 226, 275, 312, 313, 314, and 316 each coordinate a glycoprotein. Lys-320 is covalently cross-linked (Glycyl lysine isopeptide (Lys-Gly) (interchain with G-Cter in SUMO2)).

This sequence belongs to the histone H2A family. As to quaternary structure, the nucleosome is a histone octamer containing two molecules each of H2A, H2B, H3 and H4 assembled in one H3-H4 heterotetramer and two H2A-H2B heterodimers. Interacts with HDAC1 and HDAC2. Interacts with SPOP. Part of a complex consisting of MACROH2A1, CUL3 and SPOP. Interacts with PARP1. Monoubiquitinated at either Lys-116 or Lys-117. May also be polyubiquitinated. Ubiquitination is mediated by the CUL3/SPOP E3 complex and does not promote proteasomal degradation. Instead, it is required for enrichment in inactive X chromosome chromatin. In terms of tissue distribution, widely expressed.

It is found in the nucleus. The protein localises to the chromosome. Functionally, variant histone H2A which replaces conventional H2A in a subset of nucleosomes where it represses transcription. Nucleosomes wrap and compact DNA into chromatin, limiting DNA accessibility to the cellular machineries which require DNA as a template. Histones thereby play a central role in transcription regulation, DNA repair, DNA replication and chromosomal stability. DNA accessibility is regulated via a complex set of post-translational modifications of histones, also called histone code, and nucleosome remodeling. Involved in stable X chromosome inactivation. Inhibits the binding of transcription factors, including NF-kappa-B, and interferes with the activity of remodeling SWI/SNF complexes. Inhibits histone acetylation by EP300 and recruits class I HDACs, which induces a hypoacetylated state of chromatin. Isoform that specifically binds poly-ADP-ribose and O-acetyl-ADP-ribose and plays a key role in NAD(+) metabolism. Able to bind to the ends of poly-ADP-ribose chains created by PARP1 and cap them. This prevents PARP1 from further addition of ADP-ribose and thus limits the consumption of nuclear NAD(+), allowing the cell to maintain proper NAD(+) levels in both the nucleus and the mitochondria to promote proper mitochondrial respiration. Increases the expression of genes involved in redox metabolism, including SOD3. Its function is as follows. In contrast to isoform 1, does not bind poly-ADP-ribose. Represses SOD3 gene expression. The protein is Core histone macro-H2A.1 of Homo sapiens (Human).